A 359-amino-acid polypeptide reads, in one-letter code: Serum paraoxonase/arylesterase 1 (359 aa).

The cysteines at positions 42 and 353 are disulfide-linked. The N-linked (GlcNAc...) asparagine glycan is linked to Asn-50. Residues Glu-53 and Asp-54 each contribute to the Ca(2+) site. The active-site Proton acceptor is the His-115. Positions 117, 168, 169, and 224 each coordinate Ca(2+). The N-linked (GlcNAc...) asparagine glycan is linked to Asn-253. Residues Asp-269 and Asn-270 each coordinate Ca(2+). Asn-270 and Asn-324 each carry an N-linked (GlcNAc...) asparagine glycan.

The protein belongs to the paraoxonase family. As to quaternary structure, homodimer. Interacts with CLU. Ca(2+) is required as a cofactor. In terms of processing, glycosylated. Post-translationally, the signal sequence is not cleaved. In terms of tissue distribution, plasma. Associated with HDL.

Its subcellular location is the secreted. The protein localises to the extracellular space. The catalysed reaction is a phenyl acetate + H2O = a phenol + acetate + H(+). It carries out the reaction An aryl dialkyl phosphate + H2O = dialkyl phosphate + an aryl alcohol.. It catalyses the reaction an N-acyl-L-homoserine lactone + H2O = an N-acyl-L-homoserine + H(+). In terms of biological role, hydrolyzes the toxic metabolites of a variety of organophosphorus insecticides. Capable of hydrolyzing a broad spectrum of organophosphate substrates and lactones, and a number of aromatic carboxylic acid esters. Mediates an enzymatic protection of low density lipoproteins against oxidative modification. This is Serum paraoxonase/arylesterase 1 (PON1) from Oryctolagus cuniculus (Rabbit).